The following is a 216-amino-acid chain: Type-4 uracil-DNA glycosylase (216 aa).

Cys14 and Cys17 together coordinate [4Fe-4S] cluster. Uracil is bound by residues 41–43 (GEA), Phe55, and Asn82. Residues Cys86 and Cys102 each coordinate [4Fe-4S] cluster. His164 provides a ligand contact to uracil.

The protein belongs to the uracil-DNA glycosylase (UDG) superfamily. Type 4 (UDGa) family. In terms of assembly, interacts with the sliding clamp PCNA3 subunit.

It carries out the reaction Hydrolyzes single-stranded DNA or mismatched double-stranded DNA and polynucleotides, releasing free uracil.. Functionally, removes uracil bases that are present in DNA as a result of either deamination of cytosine or misincorporation of dUMP instead of dTMP. Can remove uracil from double-stranded DNA containing either a U/G or U/A base pair as well as from single-stranded DNA. The chain is Type-4 uracil-DNA glycosylase from Saccharolobus solfataricus (strain ATCC 35092 / DSM 1617 / JCM 11322 / P2) (Sulfolobus solfataricus).